We begin with the raw amino-acid sequence, 319 residues long: Melanoma-associated antigen B2 (319 aa).

Residues Met-1–Lys-17 show a composition bias toward basic residues. Residues Met-1–Thr-112 form a disordered region. Low complexity-rich tracts occupy residues Pro-39–Gly-57, Thr-67–Thr-79, and Ala-94–Ser-105. Phosphoserine occurs at positions 77 and 105. The region spanning Leu-111 to Ala-310 is the MAGE domain.

In terms of assembly, interacts with TRIM28. In terms of tissue distribution, expressed in testis and placenta, and in a significant fraction of tumors of various histologic types.

Its function is as follows. May enhance ubiquitin ligase activity of RING-type zinc finger-containing E3 ubiquitin-protein ligases. Proposed to act through recruitment and/or stabilization of the Ubl-conjugating enzyme (E2) at the E3:substrate complex. The polypeptide is Melanoma-associated antigen B2 (MAGEB2) (Homo sapiens (Human)).